We begin with the raw amino-acid sequence, 275 residues long: Large ribosomal subunit protein uL2 (275 aa).

Disordered stretches follow at residues 28–54 (APHA…TRHI) and 223–275 (VAMN…RNKK).

Belongs to the universal ribosomal protein uL2 family. As to quaternary structure, part of the 50S ribosomal subunit. Forms a bridge to the 30S subunit in the 70S ribosome.

One of the primary rRNA binding proteins. Required for association of the 30S and 50S subunits to form the 70S ribosome, for tRNA binding and peptide bond formation. It has been suggested to have peptidyltransferase activity; this is somewhat controversial. Makes several contacts with the 16S rRNA in the 70S ribosome. The chain is Large ribosomal subunit protein uL2 from Saccharophagus degradans (strain 2-40 / ATCC 43961 / DSM 17024).